The sequence spans 172 residues: 3-hydroxydecanoyl-[acyl-carrier-protein] dehydratase (172 aa).

Residue His-71 is part of the active site.

This sequence belongs to the thioester dehydratase family. FabA subfamily. As to quaternary structure, homodimer.

The protein localises to the cytoplasm. It catalyses the reaction a (3R)-hydroxyacyl-[ACP] = a (2E)-enoyl-[ACP] + H2O. The enzyme catalyses (3R)-hydroxydecanoyl-[ACP] = (2E)-decenoyl-[ACP] + H2O. It carries out the reaction (2E)-decenoyl-[ACP] = (3Z)-decenoyl-[ACP]. It functions in the pathway lipid metabolism; fatty acid biosynthesis. In terms of biological role, necessary for the introduction of cis unsaturation into fatty acids. Catalyzes the dehydration of (3R)-3-hydroxydecanoyl-ACP to E-(2)-decenoyl-ACP and then its isomerization to Z-(3)-decenoyl-ACP. Can catalyze the dehydratase reaction for beta-hydroxyacyl-ACPs with saturated chain lengths up to 16:0, being most active on intermediate chain length. The polypeptide is 3-hydroxydecanoyl-[acyl-carrier-protein] dehydratase (Pseudoalteromonas atlantica (strain T6c / ATCC BAA-1087)).